A 115-amino-acid polypeptide reads, in one-letter code: UPF0738 protein SAB0871 (115 aa).

The protein belongs to the UPF0738 family.

The sequence is that of UPF0738 protein SAB0871 from Staphylococcus aureus (strain bovine RF122 / ET3-1).